We begin with the raw amino-acid sequence, 121 residues long: Large ribosomal subunit protein uL3 (121 aa).

Q62 bears the N5-methylglutamine mark.

It belongs to the universal ribosomal protein uL3 family. Part of the 50S ribosomal subunit. Forms a cluster with proteins L14 and L19. In terms of processing, methylated by PrmB.

Its function is as follows. One of the primary rRNA binding proteins, it binds directly near the 3'-end of the 23S rRNA, where it nucleates assembly of the 50S subunit. The sequence is that of Large ribosomal subunit protein uL3 (rplC) from Aggregatibacter actinomycetemcomitans (Actinobacillus actinomycetemcomitans).